The primary structure comprises 430 residues: Serine hydroxymethyltransferase (430 aa).

Position 120–122 (glycine 120–isoleucine 122) interacts with (6S)-5,6,7,8-tetrahydrofolate. Lysine 226 carries the N6-(pyridoxal phosphate)lysine modification.

Belongs to the SHMT family. As to quaternary structure, homodimer. Pyridoxal 5'-phosphate serves as cofactor.

It is found in the cytoplasm. The protein operates within amino-acid biosynthesis; glycine biosynthesis; glycine from L-serine: step 1/1. Functionally, catalyzes the reversible interconversion of serine and glycine with a modified folate serving as the one-carbon carrier. Also exhibits a pteridine-independent aldolase activity toward beta-hydroxyamino acids, producing glycine and aldehydes, via a retro-aldol mechanism. In Pyrobaculum islandicum (strain DSM 4184 / JCM 9189 / GEO3), this protein is Serine hydroxymethyltransferase.